Here is a 640-residue protein sequence, read N- to C-terminus: 1,4-alpha-glucan branching enzyme GlgB (640 aa).

The Nucleophile role is filled by Asp318. Catalysis depends on Glu371, which acts as the Proton donor.

This sequence belongs to the glycosyl hydrolase 13 family. GlgB subfamily. Monomer.

The catalysed reaction is Transfers a segment of a (1-&gt;4)-alpha-D-glucan chain to a primary hydroxy group in a similar glucan chain.. It participates in glycan biosynthesis; glycogen biosynthesis. Catalyzes the formation of the alpha-1,6-glucosidic linkages in glycogen by scission of a 1,4-alpha-linked oligosaccharide from growing alpha-1,4-glucan chains and the subsequent attachment of the oligosaccharide to the alpha-1,6 position. The chain is 1,4-alpha-glucan branching enzyme GlgB from Francisella tularensis subsp. holarctica (strain LVS).